A 170-amino-acid polypeptide reads, in one-letter code: Bifunctional protein PyrR (170 aa).

The PRPP-binding motif lies at 90-102 (LVLVDDVLMSGRT).

The protein belongs to the purine/pyrimidine phosphoribosyltransferase family. PyrR subfamily.

The catalysed reaction is UMP + diphosphate = 5-phospho-alpha-D-ribose 1-diphosphate + uracil. Regulates the transcription of the pyrimidine nucleotide (pyr) operon in response to exogenous pyrimidines. Functionally, also displays a weak uracil phosphoribosyltransferase activity which is not physiologically significant. This is Bifunctional protein PyrR from Pseudomonas aeruginosa (strain LESB58).